Here is a 180-residue protein sequence, read N- to C-terminus: Large ribosomal subunit protein uL6 (180 aa).

The protein belongs to the universal ribosomal protein uL6 family. As to quaternary structure, part of the 50S ribosomal subunit.

Functionally, this protein binds to the 23S rRNA, and is important in its secondary structure. It is located near the subunit interface in the base of the L7/L12 stalk, and near the tRNA binding site of the peptidyltransferase center. This Anaeromyxobacter dehalogenans (strain 2CP-C) protein is Large ribosomal subunit protein uL6.